A 515-amino-acid polypeptide reads, in one-letter code: Glucose-6-phosphate 1-dehydrogenase X (515 aa).

Ala2 is modified (N-acetylalanine). NADP(+) is bound by residues 38-45 (GASGDLAK), Arg72, Tyr147, and Lys171. Residues Lys171, 201–205 (HYLGK), Glu239, and Asp258 contribute to the D-glucose 6-phosphate site. The active-site Proton acceptor is the His263. Position 357 (Arg357) interacts with NADP(+). D-glucose 6-phosphate contacts are provided by Lys360 and Arg365. Residues Lys366, Arg370, and Arg393 each contribute to the NADP(+) site. Gln395 provides a ligand contact to D-glucose 6-phosphate. Residues 401–403 (YTK), 421–423 (DLT), Arg487, and Tyr503 contribute to the NADP(+) site. Tyr507 carries the phosphotyrosine modification. Trp509 contributes to the NADP(+) binding site.

The protein belongs to the glucose-6-phosphate dehydrogenase family. As to quaternary structure, homotetramer; dimer of dimers. Interacts with SIRT2; the interaction is enhanced by H(2)O(2) treatment. Forms a ternary complex with ALDOB and TP53; this interaction is direct. ALDOB stabilizes the complex inhibiting G6PD activity and keeping oxidative pentose phosphate metabolism in check. In terms of processing, acetylated by ELP3 at Lys-403; acetylation inhibits its homodimerization and enzyme activity. Deacetylated by SIRT2 at Lys-403; deacetylation stimulates its enzyme activity.

The protein resides in the cytoplasm. It localises to the cytosol. It is found in the membrane. It carries out the reaction D-glucose 6-phosphate + NADP(+) = 6-phospho-D-glucono-1,5-lactone + NADPH + H(+). It participates in carbohydrate degradation; pentose phosphate pathway; D-ribulose 5-phosphate from D-glucose 6-phosphate (oxidative stage): step 1/3. Its function is as follows. Catalyzes the rate-limiting step of the oxidative pentose-phosphate pathway, which represents a route for the dissimilation of carbohydrates besides glycolysis. The main function of this enzyme is to provide reducing power (NADPH) and pentose phosphates for fatty acid and nucleic acid synthesis. The polypeptide is Glucose-6-phosphate 1-dehydrogenase X (G6pdx) (Mus musculus (Mouse)).